A 210-amino-acid polypeptide reads, in one-letter code: Somatotropin (210 aa).

An N-terminal signal peptide occupies residues 1-22; the sequence is MGQVFLLMPVLLVSCFLSHGAA. Position 38 (His-38) interacts with Zn(2+). Cys-71 and Cys-183 are disulfide-bonded. Glu-192 is a binding site for Zn(2+). An intrachain disulfide couples Cys-200 to Cys-208.

The protein belongs to the somatotropin/prolactin family.

The protein resides in the secreted. Its function is as follows. Growth hormone plays an important role in growth control and is involved in the regulation of several anabolic processes. Implicated as an osmoregulatory substance important for seawater adaptation. This Oncorhynchus masou (Cherry salmon) protein is Somatotropin (gh).